We begin with the raw amino-acid sequence, 330 residues long: Methionine import ATP-binding protein MetN (330 aa).

Positions 2 to 241 (IAFRGVSKVY…PSTRLHQLCF (240 aa)) constitute an ABC transporter domain. 38 to 45 (GQSGAGKS) provides a ligand contact to ATP.

Belongs to the ABC transporter superfamily. Methionine importer (TC 3.A.1.24) family. The complex is composed of two ATP-binding proteins (MetN), two transmembrane proteins (MetI) and a solute-binding protein (MetQ).

Its subcellular location is the cell inner membrane. It catalyses the reaction L-methionine(out) + ATP + H2O = L-methionine(in) + ADP + phosphate + H(+). It carries out the reaction D-methionine(out) + ATP + H2O = D-methionine(in) + ADP + phosphate + H(+). In terms of biological role, part of the ABC transporter complex MetNIQ involved in methionine import. Responsible for energy coupling to the transport system. This Myxococcus xanthus (strain DK1622) protein is Methionine import ATP-binding protein MetN.